Here is a 567-residue protein sequence, read N- to C-terminus: Potassium-transporting ATPase potassium-binding subunit (567 aa).

11 helical membrane-spanning segments follow: residues 5-25, 64-84, 136-156, 179-199, 254-274, 285-305, 332-352, 359-376, 421-441, 486-506, and 529-549; these read GWIQILVFCGIIILLVKPLGG, TTYAASLLLFNLAGFLLLYML, GLTVQNFVSAATGVAIAIALI, LYVLLPLCIILTLAFVSLGVP, ISNMIQMVAIFAIGASLTNVF, WAIFAAMGILFVAGVAICYWA, IAMSALFAVVTTAASCGAVIA, ALGGMIPMINMMLGEIII, MLAVLCLPLSILGFTAIASVI, ITIGLAMLMGRFLVILPAMAI, and LFVGLLIGVILVVGGLIFFPA.

Belongs to the KdpA family. The system is composed of three essential subunits: KdpA, KdpB and KdpC.

It is found in the cell inner membrane. Part of the high-affinity ATP-driven potassium transport (or Kdp) system, which catalyzes the hydrolysis of ATP coupled with the electrogenic transport of potassium into the cytoplasm. This subunit binds the periplasmic potassium ions and delivers the ions to the membrane domain of KdpB through an intramembrane tunnel. This is Potassium-transporting ATPase potassium-binding subunit from Brucella anthropi (strain ATCC 49188 / DSM 6882 / CCUG 24695 / JCM 21032 / LMG 3331 / NBRC 15819 / NCTC 12168 / Alc 37) (Ochrobactrum anthropi).